Here is a 501-residue protein sequence, read N- to C-terminus: Microtubule-associated protein mmb1 (501 aa).

Polar residues-rich tracts occupy residues N61 to V95, R103 to A122, and H132 to A168. 3 disordered regions span residues N61 to N274, V328 to N381, and N478 to I501. Residues S234–V252 show a composition bias toward low complexity. Composition is skewed to polar residues over residues N253–N274, S367–N381, and N478–L495.

It is found in the cytoplasm. The protein resides in the cytoskeleton. Functionally, involved in the cell polarity process and in regulation of microtubule growth. Has a role in meiosis. Involved in microtubule dynamics. Binds to mitochondria and microtubules, attaching the tubular mitochondria to the microtubule lattice at multiple discrete interaction sites. The protein is Microtubule-associated protein mmb1 of Schizosaccharomyces pombe (strain 972 / ATCC 24843) (Fission yeast).